The following is a 460-amino-acid chain: Probable fibrosin-1 (460 aa).

Residue Lys-8 forms a Glycyl lysine isopeptide (Lys-Gly) (interchain with G-Cter in SUMO2) linkage. 3 disordered regions span residues 40 to 79 (SLQG…FRPP), 205 to 311 (FAQK…KEEA), and 406 to 460 (YSRL…RADR). Residues 212–223 (GAPPAFASPPDP) show a composition bias toward pro residues. Asymmetric dimethylarginine occurs at positions 229 and 239. Residues 248 to 272 (GSDKERPVERREPSITKEEKDRDLP) show a composition bias toward basic and acidic residues. Residue Ser-281 is modified to Phosphoserine. The span at 288–311 (RAGEEGPRPTKESVRVKEERKEEA) shows a compositional bias: basic and acidic residues. Over residues 436 to 453 (APPPLVPAPRPSSPPRGP) the composition is skewed to pro residues.

In Homo sapiens (Human), this protein is Probable fibrosin-1 (FBRS).